Consider the following 559-residue polypeptide: NXPE family member 2 (559 aa).

Residues 17–37 (AIARKLLLMLTFILIFWIIYL) traverse the membrane as a helical segment.

It belongs to the NXPE family.

The protein resides in the membrane. The sequence is that of NXPE family member 2 (NXPE2) from Homo sapiens (Human).